The sequence spans 284 residues: Pantothenate synthetase (284 aa).

30-37 (MGNLHDGH) lines the ATP pocket. Residue H37 is the Proton donor of the active site. A (R)-pantoate-binding site is contributed by Q61. Beta-alanine is bound at residue Q61. ATP is bound at residue 149–152 (GEKD). A (R)-pantoate-binding site is contributed by Q155. ATP contacts are provided by residues I178 and 186–189 (LSSR).

This sequence belongs to the pantothenate synthetase family. In terms of assembly, homodimer.

It is found in the cytoplasm. It catalyses the reaction (R)-pantoate + beta-alanine + ATP = (R)-pantothenate + AMP + diphosphate + H(+). The protein operates within cofactor biosynthesis; (R)-pantothenate biosynthesis; (R)-pantothenate from (R)-pantoate and beta-alanine: step 1/1. Its function is as follows. Catalyzes the condensation of pantoate with beta-alanine in an ATP-dependent reaction via a pantoyl-adenylate intermediate. The protein is Pantothenate synthetase of Salmonella paratyphi A (strain ATCC 9150 / SARB42).